Here is a 66-residue protein sequence, read N- to C-terminus: Translational regulator CsrA (66 aa).

The protein belongs to the CsrA/RsmA family. In terms of assembly, homodimer; the beta-strands of each monomer intercalate to form a hydrophobic core, while the alpha-helices form wings that extend away from the core.

It localises to the cytoplasm. Its function is as follows. A key translational regulator that binds mRNA to regulate translation initiation and/or mRNA stability. Mediates global changes in gene expression, shifting from rapid growth to stress survival by linking envelope stress, the stringent response and the catabolite repression systems. Usually binds in the 5'-UTR; binding at or near the Shine-Dalgarno sequence prevents ribosome-binding, repressing translation, binding elsewhere in the 5'-UTR can activate translation and/or stabilize the mRNA. Its function is antagonized by small RNA(s). The chain is Translational regulator CsrA from Alkalilimnicola ehrlichii (strain ATCC BAA-1101 / DSM 17681 / MLHE-1).